The primary structure comprises 446 residues: Probable tRNA modification GTPase MnmE (446 aa).

Residues R28, E87, and R126 each coordinate (6S)-5-formyl-5,6,7,8-tetrahydrofolate. The region spanning G218–T373 is the TrmE-type G domain. N228 contacts K(+). Residues N228–T233, T247–T253, and D272–G275 each bind GTP. S232 contacts Mg(2+). The K(+) site is built by T247, I249, and T252. T253 contributes to the Mg(2+) binding site. K446 provides a ligand contact to (6S)-5-formyl-5,6,7,8-tetrahydrofolate.

It belongs to the TRAFAC class TrmE-Era-EngA-EngB-Septin-like GTPase superfamily. TrmE GTPase family. K(+) is required as a cofactor.

It localises to the plastid. It is found in the chloroplast. Its function is as follows. Exhibits a very high intrinsic GTPase hydrolysis rate. Involved in the addition of a carboxymethylaminomethyl (cmnm) group at the wobble position (U34) of certain tRNAs, forming tRNA-cmnm(5)s(2)U34. This Cyanidioschyzon merolae (strain NIES-3377 / 10D) (Unicellular red alga) protein is Probable tRNA modification GTPase MnmE.